The chain runs to 682 residues: Potassium-transporting ATPase ATP-binding subunit (682 aa).

The next 4 helical transmembrane spans lie at 34-54, 62-82, 219-239, and 254-274; these read PVMF…IAMA, ALFS…ANFA, IALT…TATL, and VLVA…LSAI. Residue D307 is the 4-aspartylphosphate intermediate of the active site. ATP-binding positions include D344, E348, 377–384, and K395; that span reads FTAQSRMS. Residues D518 and D522 each coordinate Mg(2+). The next 3 helical transmembrane spans lie at 588–608, 616–636, and 656–676; these read FAII…LNIM, AILS…PLAL, and IYGL…DLLL.

It belongs to the cation transport ATPase (P-type) (TC 3.A.3) family. Type IA subfamily. The system is composed of three essential subunits: KdpA, KdpB and KdpC.

Its subcellular location is the cell inner membrane. It catalyses the reaction K(+)(out) + ATP + H2O = K(+)(in) + ADP + phosphate + H(+). Functionally, part of the high-affinity ATP-driven potassium transport (or Kdp) system, which catalyzes the hydrolysis of ATP coupled with the electrogenic transport of potassium into the cytoplasm. This subunit is responsible for energy coupling to the transport system and for the release of the potassium ions to the cytoplasm. The chain is Potassium-transporting ATPase ATP-binding subunit from Escherichia coli O157:H7 (strain EC4115 / EHEC).